The sequence spans 351 residues: Photosystem II D2 protein (351 aa).

Residues cysteine 39–threonine 59 form a helical membrane-spanning segment. Histidine 116 contacts chlorophyll a. A helical membrane pass occupies residues glycine 123 to proline 139. Residues glutamine 128 and asparagine 141 each contribute to the pheophytin a site. Residues valine 151–alanine 164 traverse the membrane as a helical segment. Histidine 196 is a binding site for chlorophyll a. A helical membrane pass occupies residues glycine 206–glutamate 226. A plastoquinone-binding residues include histidine 213 and phenylalanine 260. Fe cation is bound at residue histidine 213. Histidine 267 lines the Fe cation pocket. Residues glycine 277–arginine 293 form a helical membrane-spanning segment.

Belongs to the reaction center PufL/M/PsbA/D family. In terms of assembly, PSII is composed of 1 copy each of membrane proteins PsbA, PsbB, PsbC, PsbD, PsbE, PsbF, PsbH, PsbI, PsbJ, PsbK, PsbL, PsbM, PsbT, PsbX, PsbY, PsbZ, Psb30/Ycf12, at least 3 peripheral proteins of the oxygen-evolving complex and a large number of cofactors. It forms dimeric complexes. It depends on The D1/D2 heterodimer binds P680, chlorophylls that are the primary electron donor of PSII, and subsequent electron acceptors. It shares a non-heme iron and each subunit binds pheophytin, quinone, additional chlorophylls, carotenoids and lipids. There is also a Cl(-1) ion associated with D1 and D2, which is required for oxygen evolution. The PSII complex binds additional chlorophylls, carotenoids and specific lipids. as a cofactor.

It localises to the plastid. Its subcellular location is the chloroplast thylakoid membrane. The catalysed reaction is 2 a plastoquinone + 4 hnu + 2 H2O = 2 a plastoquinol + O2. Photosystem II (PSII) is a light-driven water:plastoquinone oxidoreductase that uses light energy to abstract electrons from H(2)O, generating O(2) and a proton gradient subsequently used for ATP formation. It consists of a core antenna complex that captures photons, and an electron transfer chain that converts photonic excitation into a charge separation. The D1/D2 (PsbA/PsbD) reaction center heterodimer binds P680, the primary electron donor of PSII as well as several subsequent electron acceptors. D2 is needed for assembly of a stable PSII complex. The chain is Photosystem II D2 protein from Cyanidioschyzon merolae (strain NIES-3377 / 10D) (Unicellular red alga).